Reading from the N-terminus, the 147-residue chain is Protein SprT-like (147 aa).

The 138-residue stretch at 5-142 (DYVNEVSLED…SFCRGHLKEI (138 aa)) folds into the SprT-like domain. His64 lines the Zn(2+) pocket. Residue Glu65 is part of the active site. His68 serves as a coordination point for Zn(2+).

It belongs to the SprT family. Requires Zn(2+) as cofactor.

The protein resides in the cytoplasm. This is Protein SprT-like from Streptococcus uberis (strain ATCC BAA-854 / 0140J).